The chain runs to 939 residues: Nonsense-mediated mRNA decay factor SMG8 (939 aa).

Disordered stretches follow at residues 561–600 (KICT…QLSP) and 617–645 (LNES…ADTE). Positions 567–587 (GEDENEDGETEEADEDTEEKE) are enriched in acidic residues. Positions 617-629 (LNESQESSEQLSG) are enriched in low complexity.

It belongs to the SMG8 family.

Functionally, involved in nonsense-mediated decay (NMD) of mRNAs containing premature stop codons. Probable component of kinase complex containing nonC and recruited to stalled ribosomes. The polypeptide is Nonsense-mediated mRNA decay factor SMG8 (Drosophila ananassae (Fruit fly)).